Reading from the N-terminus, the 347-residue chain is S-adenosylmethionine:tRNA ribosyltransferase-isomerase (347 aa).

Belongs to the QueA family. In terms of assembly, monomer.

It is found in the cytoplasm. It catalyses the reaction 7-aminomethyl-7-carbaguanosine(34) in tRNA + S-adenosyl-L-methionine = epoxyqueuosine(34) in tRNA + adenine + L-methionine + 2 H(+). It functions in the pathway tRNA modification; tRNA-queuosine biosynthesis. Its function is as follows. Transfers and isomerizes the ribose moiety from AdoMet to the 7-aminomethyl group of 7-deazaguanine (preQ1-tRNA) to give epoxyqueuosine (oQ-tRNA). This chain is S-adenosylmethionine:tRNA ribosyltransferase-isomerase, found in Treponema denticola (strain ATCC 35405 / DSM 14222 / CIP 103919 / JCM 8153 / KCTC 15104).